The chain runs to 305 residues: Methionyl-tRNA formyltransferase (305 aa).

Residue 109–112 (SLLP) coordinates (6S)-5,6,7,8-tetrahydrofolate.

Belongs to the Fmt family.

It carries out the reaction L-methionyl-tRNA(fMet) + (6R)-10-formyltetrahydrofolate = N-formyl-L-methionyl-tRNA(fMet) + (6S)-5,6,7,8-tetrahydrofolate + H(+). Its function is as follows. Attaches a formyl group to the free amino group of methionyl-tRNA(fMet). The formyl group appears to play a dual role in the initiator identity of N-formylmethionyl-tRNA by promoting its recognition by IF2 and preventing the misappropriation of this tRNA by the elongation apparatus. This chain is Methionyl-tRNA formyltransferase, found in Roseobacter denitrificans (strain ATCC 33942 / OCh 114) (Erythrobacter sp. (strain OCh 114)).